A 502-amino-acid chain; its full sequence is Protein krueppel (502 aa).

2 disordered regions span residues 115–164 and 178–202; these read PPQG…KLSV and DMYH…THDG. Low complexity-rich tracts occupy residues 119–136 and 183–198; these read THLH…STPL and SGGP…SPNS. 5 C2H2-type zinc fingers span residues 222–244, 250–272, 278–300, 306–328, and 334–354; these read FTCK…ERTH, FECP…MRLH, YHCS…LRVH, YTCE…MLVH, and FECE…NHKC. Disordered regions lie at residues 399 to 427 and 445 to 502; these read NESV…SVDG and RLPP…HQQH. Positions 410–419 are enriched in acidic residues; sequence EDDGPLDLSE. Phosphoserine is present on residues S468, S471, and S477. Residues 482 to 491 are compositionally biased toward acidic residues; the sequence is DDIDLYDLDD.

This sequence belongs to the krueppel C2H2-type zinc-finger protein family.

It is found in the nucleus. Krueppel is a gap class segmentation protein. It is involved in the segmentation of the embryo and in the differentiation of the Malpighian tubules. This chain is Protein krueppel (Kr), found in Drosophila melanogaster (Fruit fly).